A 349-amino-acid polypeptide reads, in one-letter code: C-X-C chemokine receptor type 4 (349 aa).

The interval 1-18 (MEIYTSDNYSEEVGSGDY) is important for chemokine binding and signaling. Residues 1-23 (MEIYTSDNYSEEVGSGDYDSNKE) are disordered. Residues 1-35 (MEIYTSDNYSEEVGSGDYDSNKEPCFRDENENFNR) are Extracellular-facing. Asn8 is a glycosylation site (N-linked (GlcNAc...) asparagine). Sulfotyrosine is present on Tyr9. Ser15 carries O-linked (Xyl...) (chondroitin sulfate) serine glycosylation. Tyr18 is modified (sulfotyrosine). Intrachain disulfides connect Cys25-Cys271 and Cys106-Cys183. A helical membrane pass occupies residues 36–60 (IFLPTIYFIIFLTGIVGNGLVILVM). The Cytoplasmic segment spans residues 61-74 (GYQKKLRSMTDKYR). The helical transmembrane segment at 75–96 (LHLSVADLLFVITLPFWAVDAM) threads the bilayer. Residues 91–94 (WAVD) are chemokine binding. At 97 to 107 (ADWYFGKFLCK) the chain is on the extracellular side. Residues 108–127 (AVHIIYTVNLYSSVLILAFI) form a helical membrane-spanning segment. The chemokine binding stretch occupies residues 110–114 (HIIYT). Topologically, residues 128 to 151 (SLDRYLAIVHATNSQRPRKLLAEK) are cytoplasmic. The Important for signaling motif lies at 130 to 132 (DRY). Residues 132–144 (YLAIVHATNSQRP) are involved in dimerization; when bound to chemokine. A helical transmembrane segment spans residues 152 to 171 (AVYVGVWIPALLLTIPDIIF). Over 172–192 (ADVSQGDGRYICDRLYPDSLW) the chain is Extracellular. The interval 183-187 (CDRLY) is chemokine binding, important for signaling. Residues 188–207 (PDSLWMVVFQFQHIMVGLIL) are involved in dimerization. The chain crosses the membrane as a helical span at residues 193-213 (MVVFQFQHIMVGLILPGIVIL). Residues 214-238 (SCYCIIISKLSHSKGHQKRKALKTT) lie on the Cytoplasmic side of the membrane. Residues 239 to 258 (VILILAFFACWLPYYVGISI) traverse the membrane as a helical segment. Residues 259–279 (DSFILLEVIKQGCEFESVVHK) lie on the Extracellular side of the membrane. An involved in dimerization region spans residues 263 to 265 (LLE). Residues 280–299 (WISITEALAFFHCCLNPILY) traverse the membrane as a helical segment. The Cytoplasmic segment spans residues 300-349 (AFLGAKFKSSAQHALNSMSRGSSLKILSKGKRGGHSSVSTESESSSFHSS). Phosphoserine occurs at positions 316 and 318. A phosphoserine; by PKC and GRK6 mark is found at Ser321 and Ser322. The tract at residues 325–349 (ILSKGKRGGHSSVSTESESSSFHSS) is disordered. Phosphoserine; by GRK6 is present on Ser327. Lys328 participates in a covalent cross-link: Glycyl lysine isopeptide (Lys-Gly) (interchain with G-Cter in ubiquitin). Residues 334–349 (HSSVSTESESSSFHSS) are compositionally biased toward low complexity. At Ser336 the chain carries Phosphoserine; by GRK6. Residues Ser345 and Ser348 each carry the phosphoserine modification.

It belongs to the G-protein coupled receptor 1 family. In terms of assembly, monomer. Can form homodimers. Interacts with CD164. Interacts with ARRB2; the interaction is dependent on the C-terminal phosphorylation of CXCR4 and allows activation of MAPK1 and MAPK3. Interacts with ARR3; the interaction is dependent on the C-terminal phosphorylation of CXCR4 and modulates calcium mobilization. Interacts with RNF113A; the interaction, enhanced by CXCL12, promotes CXCR4 ubiquitination and subsequent degradation. Interacts (via the cytoplasmic C-terminal) with ITCH (via the WW domains I and II); the interaction, enhanced by CXCL12, promotes CXCR4 ubiquitination and leads to its degradation. Interacts with extracellular ubiquitin. Interacts with DBN1; this interaction is enhanced by antigenic stimulation. Following LPS binding, may form a complex with GDF5, HSP90AA1 and HSPA8. Phosphorylated on agonist stimulation. Rapidly phosphorylated on serine and threonine residues in the C-terminal. Phosphorylation at Ser-321 and Ser-322 leads to recruitment of ITCH, ubiquitination and protein degradation. In terms of processing, ubiquitinated after ligand binding, leading to its degradation. Ubiquitinated by ITCH at the cell membrane on agonist stimulation. The ubiquitin-dependent mechanism, endosomal sorting complex required for transport (ESCRT), then targets CXCR4 for lysosomal degradation. This process is dependent also on prior Ser-/Thr-phosphorylation in the C-terminal of CXCR4. Also binding of ARRB1 to STAM negatively regulates CXCR4 sorting to lysosomes though modulating ubiquitination of SFR5S. Post-translationally, sulfation is required for efficient binding of CXCL12/SDF-1alpha and promotes its dimerization. O- and N-glycosylated. N-glycosylation can mask coreceptor function. The O-glycosylation chondroitin sulfate attachment does not affect interaction with CXCL12/SDF-1alpha nor its coreceptor activity.

The protein localises to the cell membrane. Its subcellular location is the cell junction. It localises to the early endosome. The protein resides in the late endosome. It is found in the lysosome. In terms of biological role, receptor for the C-X-C chemokine CXCL12/SDF-1 that transduces a signal by increasing intracellular calcium ion levels and enhancing MAPK1/MAPK3 activation. Involved in the AKT signaling cascade. Plays a role in regulation of cell migration, e.g. during wound healing. Acts as a receptor for extracellular ubiquitin; leading to enhanced intracellular calcium ions and reduced cellular cAMP levels. Binds bacterial lipopolysaccharide (LPS) et mediates LPS-induced inflammatory response, including TNF secretion by monocytes. Involved in hematopoiesis and in cardiac ventricular septum formation. Also plays an essential role in vascularization of the gastrointestinal tract, probably by regulating vascular branching and/or remodeling processes in endothelial cells. Involved in cerebellar development. In the CNS, could mediate hippocampal-neuron survival. This Rattus norvegicus (Rat) protein is C-X-C chemokine receptor type 4 (Cxcr4).